Here is a 364-residue protein sequence, read N- to C-terminus: Trans-enoyl reductase ccsC (364 aa).

52-55 (CDYK) serves as a coordination point for NADP(+). Residue 141–148 (TGLATLGM) participates in substrate binding. Residues 176 to 179 (SSSV), 199 to 202 (SPRN), Y217, and 264 to 265 (LE) each bind NADP(+). Residue 284–288 (GPALL) coordinates substrate. Residue 353–354 (VS) coordinates NADP(+).

Belongs to the zinc-containing alcohol dehydrogenase family. As to quaternary structure, monomer.

The protein operates within mycotoxin biosynthesis. Its function is as follows. Trans-enoyl reductase; part of the gene cluster that mediates the biosynthesis of a family of the mycotoxins cytochalasins E and K. The hybrid PKS-NRPS synthetase ccsA and the enoyl reductase ccsC are responsible for fusion of phenylalanine with an octaketide backbone and subsequent release of the stable tetramic acid precursor. The polyketide synthase module (PKS) of the PKS-NRPS ccsA is responsible for the synthesis of the octaketide backbone. The downstream nonribosomal peptide synthetase (NRPS) amidates the carboxyl end of the octaketide with a phenylalanine. A reductase-like domain (R) at the C-terminus catalyzes the reductive release of the polyketide-amino acid intermediate. Because ccsA lacks a designated enoylreductase (ER) domain, the required activity is provided the enoyl reductase ccsC. Upon formation of the 11-membered carbocycle-fused perhydroisoindolone intermediate, a number of oxidative steps are required to afford the final cytochalasin E and K, including two hydroxylations at C17 and C18, one alcohol oxidation at C17, one epoxidation at C6 and C7 and two Baeyer-Villiger oxidations. The oxidative modification at C17, C18 and the C6-C7 epoxidation are likely to be catalyzed by the two cytochrome P450 oxygenases ccsD and ccsG. CcsD may be responsible for the epoxidation of the C6-C7 double bond. CcsG may be responsible for the successive oxidative modifications at C17 and C18. The double Baeyer-Villiger oxidations of ketocytochalasin to precytochalasin and cytochalasin Z(16) are among the final steps leading to cytochalasin E and K and are catalyzed by ccsB. The first oxygen insertion step follows that of the classic BVMO mechanism, generating the ester precytochalasin. Release of precytochalasin into an aqueous environment can generate the shunt product iso-precytochalasin through spontaneous isomerization. Alternatively, precytochalasin can undergo further oxidation by ccsB to yield the in-line carbonate-containing cytochalasin Z(16). Cytochalasin Z(16) is a precursor to cytochalasin E and cytochalasin K, whereas iso-precytochalasin is a precursor to cytochalasin Z(17) and rosellichalasin. The hydrolyase ccsE may catalyze hydrolysis of epoxide bond in cytochalasin E to afford cytochalasin K. The function of ccsF has not been assigned but it may play a role in post-PKS-NRPS biosynthetic step, resistance or transport of cytochalasins and related PKS-NRPS products. This chain is Trans-enoyl reductase ccsC, found in Aspergillus clavatus (strain ATCC 1007 / CBS 513.65 / DSM 816 / NCTC 3887 / NRRL 1 / QM 1276 / 107).